A 336-amino-acid polypeptide reads, in one-letter code: D-alanine--D-alanine ligase (336 aa).

Positions 124-330 constitute an ATP-grasp domain; sequence KMWFSALGIP…FATFLEQAIL (207 aa). Residue 154–209 coordinates ATP; that stretch reads AFDEWGSVFIKAASQGSSVGCFPAHRREDIPGLVRKAFEYAPFVVVEKTIKARELE. Positions 284, 297, and 299 each coordinate Mg(2+).

It belongs to the D-alanine--D-alanine ligase family. It depends on Mg(2+) as a cofactor. Requires Mn(2+) as cofactor.

Its subcellular location is the cytoplasm. It catalyses the reaction 2 D-alanine + ATP = D-alanyl-D-alanine + ADP + phosphate + H(+). It functions in the pathway cell wall biogenesis; peptidoglycan biosynthesis. In terms of biological role, cell wall formation. The chain is D-alanine--D-alanine ligase from Shewanella amazonensis (strain ATCC BAA-1098 / SB2B).